A 203-amino-acid polypeptide reads, in one-letter code: Urease accessory protein UreG (203 aa).

Residue 12-19 (GPVGSGKT) participates in GTP binding.

This sequence belongs to the SIMIBI class G3E GTPase family. UreG subfamily. As to quaternary structure, homodimer. UreD, UreF and UreG form a complex that acts as a GTP-hydrolysis-dependent molecular chaperone, activating the urease apoprotein by helping to assemble the nickel containing metallocenter of UreC. The UreE protein probably delivers the nickel.

Its subcellular location is the cytoplasm. Facilitates the functional incorporation of the urease nickel metallocenter. This process requires GTP hydrolysis, probably effectuated by UreG. The protein is Urease accessory protein UreG of Alteromonas mediterranea (strain DSM 17117 / CIP 110805 / LMG 28347 / Deep ecotype).